Consider the following 1486-residue polypeptide: Chromosome partition protein MukB (1486 aa).

Glycine 34 to serine 41 serves as a coordination point for ATP. 3 coiled-coil regions span residues leucine 326 to glutamine 418, leucine 444 to glutamine 480, and arginine 509 to valine 603. Residues proline 666–arginine 783 form a flexible hinge region. Coiled-coil stretches lie at residues glutamate 835–glutamate 923, glutamate 977–alanine 1115, and valine 1209–serine 1266.

The protein belongs to the SMC family. MukB subfamily. As to quaternary structure, homodimerization via its hinge domain. Binds to DNA via its C-terminal region. Interacts, and probably forms a ternary complex, with MukE and MukF via its C-terminal region. The complex formation is stimulated by calcium or magnesium. Interacts with tubulin-related protein FtsZ.

It is found in the cytoplasm. Its subcellular location is the nucleoid. Its function is as follows. Plays a central role in chromosome condensation, segregation and cell cycle progression. Functions as a homodimer, which is essential for chromosome partition. Involved in negative DNA supercoiling in vivo, and by this means organize and compact chromosomes. May achieve or facilitate chromosome segregation by condensation DNA from both sides of a centrally located replisome during cell division. The sequence is that of Chromosome partition protein MukB from Escherichia coli O9:H4 (strain HS).